A 290-amino-acid chain; its full sequence is Acetyl-coenzyme A carboxylase carboxyl transferase subunit beta (290 aa).

Residues 28 to 290 (IMTKCPKCKK…SRGGDEWHTN (263 aa)) form the CoA carboxyltransferase N-terminal domain. Zn(2+) contacts are provided by Cys-32, Cys-35, Cys-51, and Cys-54. The C4-type zinc finger occupies 32–54 (CPKCKKIMYTKELVKNLRVCISC).

The protein belongs to the AccD/PCCB family. As to quaternary structure, acetyl-CoA carboxylase is a heterohexamer composed of biotin carboxyl carrier protein (AccB), biotin carboxylase (AccC) and two subunits each of ACCase subunit alpha (AccA) and ACCase subunit beta (AccD). Requires Zn(2+) as cofactor.

The protein localises to the cytoplasm. It catalyses the reaction N(6)-carboxybiotinyl-L-lysyl-[protein] + acetyl-CoA = N(6)-biotinyl-L-lysyl-[protein] + malonyl-CoA. It functions in the pathway lipid metabolism; malonyl-CoA biosynthesis; malonyl-CoA from acetyl-CoA: step 1/1. In terms of biological role, component of the acetyl coenzyme A carboxylase (ACC) complex. Biotin carboxylase (BC) catalyzes the carboxylation of biotin on its carrier protein (BCCP) and then the CO(2) group is transferred by the transcarboxylase to acetyl-CoA to form malonyl-CoA. The polypeptide is Acetyl-coenzyme A carboxylase carboxyl transferase subunit beta (Anoxybacillus flavithermus (strain DSM 21510 / WK1)).